A 234-amino-acid chain; its full sequence is UPF0502 protein BTH_II0990 (234 aa).

This sequence belongs to the UPF0502 family.

The protein is UPF0502 protein BTH_II0990 of Burkholderia thailandensis (strain ATCC 700388 / DSM 13276 / CCUG 48851 / CIP 106301 / E264).